We begin with the raw amino-acid sequence, 443 residues long: ATP synthase subunit b-delta (443 aa).

Residues 1-168 (MSTFIGQLIG…PSDAALDDAV (168 aa)) form an ATP synthase subunit b region. A helical transmembrane segment spans residues 4–24 (FIGQLIGFAVIVFLLVRFVVP). The interval 169–443 (GSRMRSTSRE…LASAETQLPD (275 aa)) is ATP synthase subunit delta.

The protein in the N-terminal section; belongs to the ATPase B chain family. This sequence in the C-terminal section; belongs to the ATPase delta chain family. In terms of assembly, F-type ATPases have 2 components, F(1) - the catalytic core - and F(0) - the membrane proton channel. F(1) has five subunits: alpha(3), beta(3), gamma(1), delta(1), epsilon(1). F(0) has three main subunits: a(1), b(2) and c(10-14). The alpha and beta chains form an alternating ring which encloses part of the gamma chain. F(1) is attached to F(0) by a central stalk formed by the gamma and epsilon chains, while a peripheral stalk is formed by the delta and b chains.

The protein localises to the cell membrane. In terms of biological role, f(1)F(0) ATP synthase produces ATP from ADP in the presence of a proton or sodium gradient. F-type ATPases consist of two structural domains, F(1) containing the extramembraneous catalytic core and F(0) containing the membrane proton channel, linked together by a central stalk and a peripheral stalk. During catalysis, ATP synthesis in the catalytic domain of F(1) is coupled via a rotary mechanism of the central stalk subunits to proton translocation. Functionally, this fusion protein includes a component of the F(0) channel (subunit b) and of the F(1) subunit (subunit delta). Two copies of subunit b and one of delta together form the peripheral 'stator' stalk which links F(1) to F(0). The polypeptide is ATP synthase subunit b-delta (atpFH) (Mycobacterium sp. (strain JLS)).